The sequence spans 203 residues: Holliday junction branch migration complex subunit RuvA (203 aa).

The domain I stretch occupies residues 1–64 (MIGRLRGIIL…EDAQLLYGFN (64 aa)). The segment at 65-142 (NKQERTLFKE…KGLHGDLFTP (78 aa)) is domain II. The segment at 143–154 (AVDLVLTSPASP) is flexible linker. A domain III region spans residues 155 to 203 (GSEDAEQEAVAALVALGYKPQEASRMVSKIARPDASSETLIRDALRAAL).

It belongs to the RuvA family. In terms of assembly, homotetramer. Forms an RuvA(8)-RuvB(12)-Holliday junction (HJ) complex. HJ DNA is sandwiched between 2 RuvA tetramers; dsDNA enters through RuvA and exits via RuvB. An RuvB hexamer assembles on each DNA strand where it exits the tetramer. Each RuvB hexamer is contacted by two RuvA subunits (via domain III) on 2 adjacent RuvB subunits; this complex drives branch migration. In the full resolvosome a probable DNA-RuvA(4)-RuvB(12)-RuvC(2) complex forms which resolves the HJ.

It localises to the cytoplasm. Its function is as follows. The RuvA-RuvB-RuvC complex processes Holliday junction (HJ) DNA during genetic recombination and DNA repair, while the RuvA-RuvB complex plays an important role in the rescue of blocked DNA replication forks via replication fork reversal (RFR). RuvA specifically binds to HJ cruciform DNA, conferring on it an open structure. The RuvB hexamer acts as an ATP-dependent pump, pulling dsDNA into and through the RuvAB complex. HJ branch migration allows RuvC to scan DNA until it finds its consensus sequence, where it cleaves and resolves the cruciform DNA. This is Holliday junction branch migration complex subunit RuvA from Salmonella schwarzengrund (strain CVM19633).